A 437-amino-acid polypeptide reads, in one-letter code: Phosphoglucosamine mutase (437 aa).

The active-site Phosphoserine intermediate is Ser101. Mg(2+) is bound by residues Ser101, Asp234, Asp236, and Asp238. The residue at position 101 (Ser101) is a Phosphoserine.

The protein belongs to the phosphohexose mutase family. Mg(2+) serves as cofactor. In terms of processing, activated by phosphorylation.

It catalyses the reaction alpha-D-glucosamine 1-phosphate = D-glucosamine 6-phosphate. Catalyzes the conversion of glucosamine-6-phosphate to glucosamine-1-phosphate. The sequence is that of Phosphoglucosamine mutase from Thermus thermophilus (strain ATCC 27634 / DSM 579 / HB8).